We begin with the raw amino-acid sequence, 564 residues long: Arginine--tRNA ligase (564 aa).

The 'HIGH' region motif lies at 124-134 (PNIAKDMHVGH).

It belongs to the class-I aminoacyl-tRNA synthetase family. Monomer.

The protein resides in the cytoplasm. It catalyses the reaction tRNA(Arg) + L-arginine + ATP = L-arginyl-tRNA(Arg) + AMP + diphosphate. This Chlamydia caviae (strain ATCC VR-813 / DSM 19441 / 03DC25 / GPIC) (Chlamydophila caviae) protein is Arginine--tRNA ligase.